Reading from the N-terminus, the 1215-residue chain is Kinesin-like protein KIN-7I (1215 aa).

Positions 3-327 (RIHVAVRARP…LQFASRALRV (325 aa)) constitute a Kinesin motor domain. 79–86 (GQTNSGKT) contributes to the ATP binding site. Coiled coils occupy residues 333 to 414 (VNEI…IENL), 571 to 646 (ESEA…AAYE), 708 to 855 (IRDY…KRDS), and 894 to 979 (DMEA…KEDM).

This sequence belongs to the TRAFAC class myosin-kinesin ATPase superfamily. Kinesin family. KIN-7 subfamily.

This Oryza sativa subsp. japonica (Rice) protein is Kinesin-like protein KIN-7I.